The following is a 255-amino-acid chain: MSNNYTSLSSSLDEEMGLKAGHEIDLEGSPPSEHNSEEKSTLPSNSDILTSANPVSQASETPDHSIESNTGSTQSPTSHSLLLKFSFCIVYYSYFAIVVLGCVLPFEHTHTFLIAFLVIFGIISVILFSGSIYYYETWTKTVKHFLKKVISPFKKEYIVCAFLKTFVFYGLLKTIEHFLVLLSGDKWGWKCSTLSSILTPVSCISFCLNESVQLRSCSTHLFINTVAWIKSLGGGKNAFENNYNQLNETSPEDLV.

Residues 19–78 (KAGHEIDLEGSPPSEHNSEEKSTLPSNSDILTSANPVSQASETPDHSIESNTGSTQSPTS) form a disordered region. Composition is skewed to polar residues over residues 41-60 (TLPS…QASE) and 67-78 (ESNTGSTQSPTS). 4 consecutive transmembrane segments (helical) span residues 85–105 (FSFC…CVLP), 112–132 (FLIA…SGSI), 162–182 (FLKT…LVLL), and 187–208 (WGWK…SFCL).

Belongs to the WTF family.

Its subcellular location is the spore membrane. May act in meiotic drive. The chain is Wtf element wtf15 from Schizosaccharomyces pombe (strain 972 / ATCC 24843) (Fission yeast).